A 451-amino-acid polypeptide reads, in one-letter code: Rab GDP-dissociation inhibitor (451 aa).

Interaction with YPT1 stretches follow at residues 106–112 (RYVDFKQ) and 234–259 (YPMY…TYML).

It belongs to the Rab GDI family. In terms of assembly, interacts with the GDP-bound form of Rab GTPase YPT1. Interacts with YPT10.

The protein localises to the cytoplasm. Functionally, regulates the GDP/GTP exchange reaction of SEC4 by inhibiting the dissociation of GDP from it, and the subsequent binding of GTP to SEC4. Plays an essential role in the yeast secretory pathway. Extracts GDP-bound YPT7 from vacuolar membranes, antagonizing vacuolar membrane fusion. The polypeptide is Rab GDP-dissociation inhibitor (GDI1) (Saccharomyces cerevisiae (strain ATCC 204508 / S288c) (Baker's yeast)).